The primary structure comprises 539 residues: Phospho-2-dehydro-3-deoxyheptonate aldolase 2, chloroplastic (539 aa).

Disordered regions lie at residues 1–23 (MALA…SAPQ) and 41–70 (VHAA…APEK). A chloroplast-targeting transit peptide spans 1–54 (MALATNSAAVSGGAAAAASSAPQPRLAATFLPMRRRTVSAVHAADPAKSNGPVQ). Residues 7–21 (SAAVSGGAAAAASSA) are compositionally biased toward low complexity.

It belongs to the class-II DAHP synthase family.

The protein resides in the plastid. Its subcellular location is the chloroplast. The enzyme catalyses D-erythrose 4-phosphate + phosphoenolpyruvate + H2O = 7-phospho-2-dehydro-3-deoxy-D-arabino-heptonate + phosphate. It participates in metabolic intermediate biosynthesis; chorismate biosynthesis; chorismate from D-erythrose 4-phosphate and phosphoenolpyruvate: step 1/7. In Oryza sativa subsp. japonica (Rice), this protein is Phospho-2-dehydro-3-deoxyheptonate aldolase 2, chloroplastic (DAHPS2).